The primary structure comprises 287 residues: Fructose-bisphosphate aldolase (287 aa).

Serine 50 lines the D-glyceraldehyde 3-phosphate pocket. Aspartate 85 serves as the catalytic Proton donor. Histidine 86, aspartate 107, glutamate 137, and histidine 181 together coordinate Zn(2+). Glycine 182 is a binding site for dihydroxyacetone phosphate. Histidine 209 is a binding site for Zn(2+). Dihydroxyacetone phosphate-binding positions include glycine 210–threonine 212 and asparagine 231–threonine 234. Phosphothreonine is present on residues threonine 212 and threonine 234.

This sequence belongs to the class II fructose-bisphosphate aldolase family. Zn(2+) is required as a cofactor.

The catalysed reaction is beta-D-fructose 1,6-bisphosphate = D-glyceraldehyde 3-phosphate + dihydroxyacetone phosphate. Its pathway is carbohydrate degradation; glycolysis; D-glyceraldehyde 3-phosphate and glycerone phosphate from D-glucose: step 4/4. In terms of biological role, catalyzes the aldol condensation of dihydroxyacetone phosphate (DHAP or glycerone-phosphate) with glyceraldehyde 3-phosphate (G3P) to form fructose 1,6-bisphosphate (FBP) in gluconeogenesis and the reverse reaction in glycolysis. This chain is Fructose-bisphosphate aldolase (fba), found in Geobacillus stearothermophilus (Bacillus stearothermophilus).